The following is a 383-amino-acid chain: UDP-N-acetylenolpyruvoylglucosamine reductase (383 aa).

Residues 42 to 212 (LSCQAMQLIT…TRVGFKLHKD (171 aa)) enclose the FAD-binding PCMH-type domain. R189 is an active-site residue. S267 acts as the Proton donor in catalysis. E369 is a catalytic residue.

It belongs to the MurB family. FAD is required as a cofactor.

It is found in the cytoplasm. It carries out the reaction UDP-N-acetyl-alpha-D-muramate + NADP(+) = UDP-N-acetyl-3-O-(1-carboxyvinyl)-alpha-D-glucosamine + NADPH + H(+). The protein operates within cell wall biogenesis; peptidoglycan biosynthesis. Cell wall formation. This chain is UDP-N-acetylenolpyruvoylglucosamine reductase, found in Psychrobacter sp. (strain PRwf-1).